Reading from the N-terminus, the 327-residue chain is Phenylalanine--tRNA ligase alpha subunit (327 aa).

Residue Glu252 coordinates Mg(2+).

The protein belongs to the class-II aminoacyl-tRNA synthetase family. Phe-tRNA synthetase alpha subunit type 1 subfamily. Tetramer of two alpha and two beta subunits. Mg(2+) serves as cofactor.

The protein localises to the cytoplasm. It catalyses the reaction tRNA(Phe) + L-phenylalanine + ATP = L-phenylalanyl-tRNA(Phe) + AMP + diphosphate + H(+). The sequence is that of Phenylalanine--tRNA ligase alpha subunit from Haemophilus ducreyi (strain 35000HP / ATCC 700724).